We begin with the raw amino-acid sequence, 195 residues long: Myelin-associated neurite-outgrowth inhibitor (195 aa).

Met1 is modified (N-acetylmethionine). At 1 to 18 (MNPVYSPGSSGVPYANAK) the chain is on the cytoplasmic side. At Ser6 the chain carries Phosphoserine. Residues 19-42 (GIGYPAGFPMGYAAAAPAYSPNMY) traverse the membrane as a helical segment. Residues 43 to 142 (PGANPTFQAG…PAPLPPPRGN (100 aa)) lie on the Extracellular side of the membrane. N-linked (GlcNAc...) asparagine glycosylation is present at Asn46. Residues 143–164 (GVTMGMVAGTTMAMSAGTLLTA) traverse the membrane as a helical segment. Residues 165-195 (HSPTPVAPHPVTVPTYRAPGTPTYSYVPPQW) lie on the Cytoplasmic side of the membrane.

This sequence belongs to the FAM168 family. May form homodimers. May interact with DAZAP2, FAM168A, PRDX6, RBM6, TMTC1 and YPEL2. Interacts with CDC27. In terms of processing, N-glycosylated.

It is found in the cytoplasm. Its subcellular location is the perinuclear region. It localises to the cell membrane. The protein localises to the cell projection. The protein resides in the axon. In terms of biological role, inhibitor of neuronal axonal outgrowth. Acts as a negative regulator of CDC42 and STAT3 and a positive regulator of STMN2. Positive regulator of CDC27. The polypeptide is Myelin-associated neurite-outgrowth inhibitor (FAM168B) (Bos taurus (Bovine)).